Reading from the N-terminus, the 882-residue chain is ABC transporter H family member 4 (882 aa).

Helical transmembrane passes span 4–24, 35–55, and 79–101; these read WIKL…ISVF, LLFK…LLPW, and TNGP…YAIL. In terms of domain architecture, ABC transporter spans 384–863; sequence FSYENKFSSE…NAQVYYKLLG (480 aa). ATP is bound at residue 418–425; that stretch reads GQNRSGKS. Disordered regions lie at residues 522-617, 634-669, and 710-730; these read FDPD…YSTI, SMSQ…NSGV, and NSGG…NQRS. 2 stretches are compositionally biased toward low complexity: residues 528-617 and 647-667; these read IPPT…YSTI and NGNN…INNS. Acidic residues predominate over residues 715-724; sequence DESDDDDEEA.

It belongs to the ABC transporter superfamily. ABCH family.

It is found in the membrane. In Dictyostelium discoideum (Social amoeba), this protein is ABC transporter H family member 4 (abcH4).